A 602-amino-acid chain; its full sequence is Leucine-rich repeat-containing protein 40 (602 aa).

The segment at 1 to 26 is disordered; that stretch reads MSRHMRAPRFDPRAGFHAEGKDRGPS. Positions 8–24 are enriched in basic and acidic residues; sequence PRFDPRAGFHAEGKDRG. The LRR 1 repeat unit spans residues 35–58; it reads ARSSGQLNLAGRNLGEVPQCVWRI. Ser-71 is modified (phosphoserine). LRR repeat units follow at residues 81–103, 104–126, 127–149, 150–172, 174–195, 196–219, 221–241, 242–266, 268–287, 288–310, 311–334, 336–356, 398–421, 424–447, 449–470, 471–494, 496–517, 519–540, 541–564, and 566–587; these read QTDL…DLRL, LPAL…AIRE, LDNL…EITS, LKNL…GFEH, SCLE…DFAL, LSSL…ISRM, RLKH…DVGS, MESL…SCRQ, KELH…HLQH, LQAI…EMAL, LQSL…LGNL, LKFL…IIAK, IATL…LFDA, TTLI…IVEL, EMVL…ELCL, LQKL…MSSL, KLQT…LYRI, TLEA…KMKL, MENL…LGNC, and QLRT…ILMK.

This is Leucine-rich repeat-containing protein 40 (Lrrc40) from Mus musculus (Mouse).